Consider the following 629-residue polypeptide: Dual specificity tyrosine-phosphorylation-regulated kinase 1B (629 aa).

Y63 is modified (phosphotyrosine). A disordered region spans residues 67–86 (KKRRAQQAPPQDSSTKKEKK). Positions 69–86 (RRAQQAPPQDSSTKKEKK) match the Bipartite nuclear localization signal motif. Y92 and Y111 each carry phosphotyrosine. The Protein kinase domain occupies 111-431 (YEIDSLIGKG…PLGALQHGFF (321 aa)). Residue 117–125 (IGKGSFGQV) coordinates ATP. Residue Y129 is modified to Phosphotyrosine. Residue K140 coordinates ATP. Y171 is modified (phosphotyrosine). 190 to 193 (FELL) contributes to the ATP binding site. The Proton acceptor role is filled by D239. S262 is modified (phosphoserine). The residue at position 271 (Y271) is a Phosphotyrosine; by autocatalysis. Phosphotyrosine is present on Y273. Positions 380–399 (GVQTGGPGGRRAGEPGHSPA) are disordered. A Phosphotyrosine modification is found at Y401. Disordered regions lie at residues 436-480 (DEAT…SNDN) and 496-629 (PITD…AASS). Over residues 438–477 (ATNTGPAGSSASTSPAPLDTCPSSSTASSISSSGGSSGSS) the composition is skewed to low complexity. Residues 480 to 520 (NRAYRYSNRYCGGPGPPITDCEMNSPQVLPSQPLRPWAGGD) form an interaction with RANBP9 region. Pro residues-rich tracts occupy residues 552-562 (PPSPTSPPPPE) and 574-585 (DCSPPPPAPAPQ). Position 624 is a phosphoserine (S624).

This sequence belongs to the protein kinase superfamily. CMGC Ser/Thr protein kinase family. MNB/DYRK subfamily. Dimer. Interacts with DCOHM, MAP2K3/MKK3, RANBP9 and TCF1/HNF1A. Part of a complex consisting of RANBP9, RAN, DYRK1B and COPS5. Interacts with DCAF7. Interacts with RNF169. Post-translationally, phosphorylated by MAP kinase. Tyrosine phosphorylation may be required for dimerization. Isoform 1 and isoform 2 are broadly expressed. Isoform 3 seems specific for skeletal muscle (at protein level).

Its subcellular location is the nucleus. It localises to the nucleolus. The protein localises to the chromosome. The enzyme catalyses L-seryl-[protein] + ATP = O-phospho-L-seryl-[protein] + ADP + H(+). It catalyses the reaction L-threonyl-[protein] + ATP = O-phospho-L-threonyl-[protein] + ADP + H(+). The catalysed reaction is L-tyrosyl-[protein] + ATP = O-phospho-L-tyrosyl-[protein] + ADP + H(+). Its activity is regulated as follows. Inhibited by RANBP9. In terms of biological role, dual-specificity kinase which possesses both serine/threonine and tyrosine kinase activities. Plays an essential role in ribosomal DNA (rDNA) double-strand break repair and rDNA copy number maintenance. During DNA damage, mediates transcription silencing in part via phosphorylating and enforcing DSB accumulation of the histone methyltransferase EHMT2. Enhances the transcriptional activity of TCF1/HNF1A and FOXO1. Inhibits epithelial cell migration. Mediates colon carcinoma cell survival in mitogen-poor environments. Inhibits the SHH and WNT1 pathways, thereby enhancing adipogenesis. In addition, promotes expression of the gluconeogenic enzyme glucose-6-phosphatase catalytic subunit 1 (G6PC1). The sequence is that of Dual specificity tyrosine-phosphorylation-regulated kinase 1B (Dyrk1b) from Mus musculus (Mouse).